Here is a 180-residue protein sequence, read N- to C-terminus: Large ribosomal subunit protein uL6 (180 aa).

The protein belongs to the universal ribosomal protein uL6 family. Part of the 50S ribosomal subunit.

Its function is as follows. This protein binds to the 23S rRNA, and is important in its secondary structure. It is located near the subunit interface in the base of the L7/L12 stalk, and near the tRNA binding site of the peptidyltransferase center. This Salinispora arenicola (strain CNS-205) protein is Large ribosomal subunit protein uL6.